The following is a 202-amino-acid chain: Ras-related protein RIC1 (202 aa).

Residues Gly15–Cys23, Tyr33–Thr40, Asp63–Gln67, Asn121–Asp124, and Ser151–Lys153 contribute to the GTP site. Positions Tyr37 to Phe45 match the Effector region motif. Residues Ala174–Ala185 are compositionally biased toward polar residues. Residues Ala174–Ser202 form a disordered region. Residues Cys200 and Cys201 are each lipidated (S-geranylgeranyl cysteine).

The protein belongs to the small GTPase superfamily. Rab family.

It localises to the cell membrane. Its function is as follows. Possesses GTPase activity. This is Ras-related protein RIC1 (RIC1) from Oryza sativa subsp. japonica (Rice).